The sequence spans 187 residues: UPF0340 protein SP70585_0722 (187 aa).

It belongs to the UPF0340 family.

In Streptococcus pneumoniae (strain 70585), this protein is UPF0340 protein SP70585_0722.